The primary structure comprises 73 residues: Ubiquitin-like protein 5 (73 aa).

The Ubiquitin-like domain maps to 1–73 (MIEVVCNDRL…DGMNLELYYL (73 aa)).

The protein resides in the cytoplasm. The protein is Ubiquitin-like protein 5 (ubl5) of Danio rerio (Zebrafish).